The following is a 253-amino-acid chain: Ribosome maturation protein SBDS (253 aa).

This sequence belongs to the SDO1/SBDS family. In terms of assembly, associates with the 60S ribosomal subunit.

The protein resides in the cytoplasm. Its subcellular location is the nucleus. The protein localises to the nucleolus. It localises to the nucleoplasm. It is found in the cytoskeleton. The protein resides in the spindle. Its function is as follows. Required for the assembly of mature ribosomes and ribosome biogenesis. Together with K10C3.5b/EFL1, triggers the GTP-dependent release of ribosome maturation factors from 60S pre-ribosomes in the cytoplasm, thereby activating ribosomes for translation competence by allowing 80S ribosome assembly. Required for normal levels of protein synthesis. May play a role in cellular stress resistance. May play a role in cellular response to DNA damage. May play a role in cell proliferation. This Caenorhabditis elegans protein is Ribosome maturation protein SBDS (sbds-1).